A 139-amino-acid polypeptide reads, in one-letter code: MKSCVLSNYVEGLEIIVCGYRNRLLFPFRATQVQAYFKVFSFFFFLLLTLGAAAAAKPTSERQVIFGSADKSPGYHWPVEVSAAWNYRELLCKTIGNLVGKPCSRTWRLLTKKKRAYCCCLFCCSSSYCLAGVLCVFCV.

The next 2 helical transmembrane spans lie at 35–55 (AYFK…AAAA) and 119–139 (CCLF…VFCV).

The protein localises to the membrane. This is an uncharacterized protein from Saccharomyces cerevisiae (strain ATCC 204508 / S288c) (Baker's yeast).